The chain runs to 93 residues: Small ribosomal subunit protein uS19 (93 aa).

The protein belongs to the universal ribosomal protein uS19 family.

Protein S19 forms a complex with S13 that binds strongly to the 16S ribosomal RNA. The chain is Small ribosomal subunit protein uS19 from Frankia alni (strain DSM 45986 / CECT 9034 / ACN14a).